The sequence spans 284 residues: Mevalonate kinase (284 aa).

86 to 96 contributes to the ATP binding site; it reads PIGSGLGSSAA. Asp-137 serves as the catalytic Proton acceptor.

Belongs to the GHMP kinase family. Mevalonate kinase subfamily. Homodimer. Requires Mg(2+) as cofactor.

It is found in the cytoplasm. The enzyme catalyses (R)-mevalonate + ATP = (R)-5-phosphomevalonate + ADP + H(+). It participates in isoprenoid biosynthesis; isopentenyl diphosphate biosynthesis via mevalonate pathway; isopentenyl diphosphate from (R)-mevalonate: step 1/3. Functionally, catalyzes the phosphorylation of (R)-mevalonate (MVA) to (R)-mevalonate 5-phosphate (MVAP). Functions in the mevalonate (MVA) pathway leading to isopentenyl diphosphate (IPP), a key precursor for the biosynthesis of isoprenoid compounds such as archaeal membrane lipids. The protein is Mevalonate kinase of Archaeoglobus fulgidus (strain ATCC 49558 / DSM 4304 / JCM 9628 / NBRC 100126 / VC-16).